The following is a 246-amino-acid chain: Ribonuclease PH (246 aa).

Phosphate contacts are provided by residues R95 and 133 to 135 (GTR).

It belongs to the RNase PH family. Homohexameric ring arranged as a trimer of dimers.

It carries out the reaction tRNA(n+1) + phosphate = tRNA(n) + a ribonucleoside 5'-diphosphate. Phosphorolytic 3'-5' exoribonuclease that plays an important role in tRNA 3'-end maturation. Removes nucleotide residues following the 3'-CCA terminus of tRNAs; can also add nucleotides to the ends of RNA molecules by using nucleoside diphosphates as substrates, but this may not be physiologically important. Probably plays a role in initiation of 16S rRNA degradation (leading to ribosome degradation) during starvation. This Bordetella bronchiseptica (strain ATCC BAA-588 / NCTC 13252 / RB50) (Alcaligenes bronchisepticus) protein is Ribonuclease PH.